Here is a 403-residue protein sequence, read N- to C-terminus: Anti-sigma-I factor RsgI8 (403 aa).

Over 1-59 (MTKQKGTILKLKNNLAIIMTSDCKIVSIKRQPGMYEGLEISFNKNEIINKKNKLAFYSR) the chain is Cytoplasmic. Residues 4-51 (QKGTILKLKNNLAIIMTSDCKIVSIKRQPGMYEGLEISFNKNEIINKK) form the RsgI N-terminal anti-sigma domain. Residues 60–80 (IAAGIAAIFIIMVISFNLFNN) form a helical membrane-spanning segment. Over 81-403 (NDVYAYVAID…KAKNSIEKMP (323 aa)) the chain is Extracellular. Basic and acidic residues-rich tracts occupy residues 254–314 (VHNV…EPAK), 324–335 (LPKDKTIPEEKT), and 349–403 (VEPK…EKMP). The disordered stretch occupies residues 254 to 403 (VHNVKKEEPK…KAKNSIEKMP (150 aa)).

As to quaternary structure, interacts (via RsgI N-terminal anti-sigma domain) with SigI8.

Its subcellular location is the cell membrane. In terms of biological role, anti-sigma factor for SigI8. Negatively regulates SigI8 activity through direct interaction. The chain is Anti-sigma-I factor RsgI8 from Acetivibrio thermocellus (strain ATCC 27405 / DSM 1237 / JCM 9322 / NBRC 103400 / NCIMB 10682 / NRRL B-4536 / VPI 7372) (Clostridium thermocellum).